We begin with the raw amino-acid sequence, 525 residues long: MLGKRKRVVLTIKDKLDIIKKLEEGISFKKLSVVYGIGESTVRDIKKNKERIINYANSSDPTSGVSKRKSMKSSTYEELDRVMIEWFNQQKTDGIPVSGTICAKQAKFFFDALGMEGDFNASSGWLTRFKQRHGIPKAAGKGTKLKGDETAAREFCGSFQEFVEKENLQPEQIYGADQTGLFWKCLPSRTLTLETDQSTSGCRSSRERIIIMCCANATGLHKLNLCVVGKAKKPRAFKGTDLSNLPVTYYSQKGAWIEQSVFRQWFEKYFVPQVQKHLKSKGLLEKAVLLLDFPPARPNEEMLSSDDGRIIVKYLPPNVTSLIQPMSQGVLATVKRYYRAGLLQKYMDEGNDPKIFWKNLTVLDAIYEVSRAWNMVKSSTITKAWKKLFPGNEENSGMNIDEGAILAANLATVLQNTEECEHVDIENIDQWFDSRSSDSSCQVLTDSESAEDQTKAAEQKPSSKSRKTELNPEKHISHKAALEWTENLLDYLEQQDDMLLSDKLVLRRLRTIIRKKQKIQNNKNH.

The HTH psq-type domain maps to 1-52 (MLGKRKRVVLTIKDKLDIIKKLEEGISFKKLSVVYGIGESTVRDIKKNKERI). 2 DNA-binding regions (H-T-H motif) span residues 28–48 (FKKL…IKKN) and 100–132 (TICA…FKQR). In terms of domain architecture, HTH CENPB-type spans 67–139 (KRKSMKSSTY…KQRHGIPKAA (73 aa)). Positions 168 to 385 (LQPEQIYGAD…VKSSTITKAW (218 aa)) constitute a DDE-1 domain. The disordered stretch occupies residues 442-474 (QVLTDSESAEDQTKAAEQKPSSKSRKTELNPEK).

This sequence belongs to the tigger transposable element derived protein family.

It localises to the nucleus. The sequence is that of Tigger transposable element-derived protein 2 (TIGD2) from Homo sapiens (Human).